A 320-amino-acid polypeptide reads, in one-letter code: Ribose-phosphate pyrophosphokinase (320 aa).

Residue 41-43 coordinates ATP; sequence NDN. His134 and Asp175 together coordinate Mg(2+). Lys198 is a catalytic residue. D-ribose 5-phosphate-binding residues include Arg200 and Asp224.

Belongs to the ribose-phosphate pyrophosphokinase family. Class I subfamily. In terms of assembly, homohexamer. Mg(2+) serves as cofactor.

The protein resides in the cytoplasm. The catalysed reaction is D-ribose 5-phosphate + ATP = 5-phospho-alpha-D-ribose 1-diphosphate + AMP + H(+). It participates in metabolic intermediate biosynthesis; 5-phospho-alpha-D-ribose 1-diphosphate biosynthesis; 5-phospho-alpha-D-ribose 1-diphosphate from D-ribose 5-phosphate (route I): step 1/1. Its function is as follows. Involved in the biosynthesis of the central metabolite phospho-alpha-D-ribosyl-1-pyrophosphate (PRPP) via the transfer of pyrophosphoryl group from ATP to 1-hydroxyl of ribose-5-phosphate (Rib-5-P). This chain is Ribose-phosphate pyrophosphokinase, found in Deinococcus radiodurans (strain ATCC 13939 / DSM 20539 / JCM 16871 / CCUG 27074 / LMG 4051 / NBRC 15346 / NCIMB 9279 / VKM B-1422 / R1).